The chain runs to 473 residues: Hyaluronidase-2 (473 aa).

A signal peptide spans 1–20 (MWTGLGPAVTLALVLVVAWA). Cystine bridges form between C47–C343 and C214–C230. N-linked (GlcNAc...) asparagine glycosylation is found at N77 and N106. E138 acts as the Proton donor in catalysis. N-linked (GlcNAc...) asparagine glycosylation is found at N340 and N360. An EGF-like domain is found at 364-442 (AAQYCSWAQC…YLGWGGEQCQ (79 aa)). 3 cysteine pairs are disulfide-bonded: C368–C379, C373–C430, and C432–C441. The GPI-anchor amidated glycine moiety is linked to residue G451. The propeptide at 452–473 (ASGAWAGSHLTGLLAVAVLAFT) is removed in mature form.

Belongs to the glycosyl hydrolase 56 family. As to quaternary structure, interacts with MST1R.

It localises to the cell membrane. The enzyme catalyses Random hydrolysis of (1-&gt;4)-linkages between N-acetyl-beta-D-glucosamine and D-glucuronate residues in hyaluronate.. Its function is as follows. Catalyzes hyaluronan degradation into small fragments that are endocytosed and degraded in lysosomes by HYAL1 and exoglycosidases. Essential for the breakdown of extracellular matrix hyaluronan. This Bos taurus (Bovine) protein is Hyaluronidase-2 (HYAL2).